The primary structure comprises 85 residues: Putative defensin-like protein 142 (85 aa).

Positions 1–24 (MKKSFLFTFTVLTIFTILVIGVAP) are cleaved as a signal peptide. 4 disulfides stabilise this stretch: Cys-30–Cys-78, Cys-41–Cys-63, Cys-46–Cys-73, and Cys-50–Cys-75.

It belongs to the DEFL family.

It localises to the secreted. This Arabidopsis thaliana (Mouse-ear cress) protein is Putative defensin-like protein 142 (LCR34).